Consider the following 180-residue polypeptide: Hypoxanthine-guanine phosphoribosyltransferase (180 aa).

Diphosphate is bound by residues K43 and G44. 2 residues coordinate Mg(2+): E99 and D100. D103 (proton acceptor) is an active-site residue. Residues K131, 152–153 (FI), and D159 each bind GMP. Position 165 (R165) interacts with diphosphate.

It belongs to the purine/pyrimidine phosphoribosyltransferase family. Mg(2+) serves as cofactor.

Its subcellular location is the cytoplasm. The catalysed reaction is IMP + diphosphate = hypoxanthine + 5-phospho-alpha-D-ribose 1-diphosphate. It catalyses the reaction GMP + diphosphate = guanine + 5-phospho-alpha-D-ribose 1-diphosphate. The protein operates within purine metabolism; IMP biosynthesis via salvage pathway; IMP from hypoxanthine: step 1/1. It participates in purine metabolism; GMP biosynthesis via salvage pathway; GMP from guanine: step 1/1. Purine salvage pathway enzyme that catalyzes the transfer of the ribosyl-5-phosphate group from 5-phospho-alpha-D-ribose 1-diphosphate (PRPP) to the N9 position of the 6-oxopurines hypoxanthine and guanine to form the corresponding ribonucleotides IMP (inosine 5'-monophosphate) and GMP (guanosine 5'-monophosphate), with the release of PPi. In Streptococcus pyogenes serotype M3 (strain ATCC BAA-595 / MGAS315), this protein is Hypoxanthine-guanine phosphoribosyltransferase (hpt).